The primary structure comprises 449 residues: G-protein coupled receptor 61 (449 aa).

Residues 1–14 (MESSPIPQSSGNSS) are compositionally biased toward low complexity. Residues 1–29 (MESSPIPQSSGNSSTLGRALQTPGPSTAS) form a disordered region. Residues 1–44 (MESSPIPQSSGNSSTLGRALQTPGPSTASGVPELGLRDVASESV) are Extracellular-facing. A glycan (N-linked (GlcNAc...) asparagine) is linked at Asn12. Residues 45-67 (ALFFMLLLDLTAVAGNAAVMAVI) traverse the membrane as a helical segment. The Cytoplasmic portion of the chain corresponds to 68-75 (AKTPALRK). Residues 76–98 (FVFVFHLCLVDLLAALTLMPLAM) form a helical membrane-spanning segment. Topologically, residues 99–112 (LSSSALFDHALFGE) are extracellular. The chain crosses the membrane as a helical span at residues 113 to 135 (VACRLYLFLSVCFVSLAILSVSA). The Cytoplasmic portion of the chain corresponds to 136–155 (INVERYYYVVHPMRYEVRMT). A helical transmembrane segment spans residues 156–178 (LGLVASVLVGVWVKALAMASVPV). The Extracellular portion of the chain corresponds to 179 to 206 (LGRVYWEEGAPSVNPGCSLQWSHSAYCQ). Residues 207–229 (LFVVVFAVLYFLLPLILIFVVYC) form a helical membrane-spanning segment. The Cytoplasmic portion of the chain corresponds to 230–287 (SMFRVARVAAMQHGPLPTWMETPRQRSESLSSRSTMVTSSGAHQTTPHRTFGGGKAAV). The chain crosses the membrane as a helical span at residues 288 to 310 (VLLAVGGQFLLCWLPYFSFHLYV). The Extracellular portion of the chain corresponds to 311-324 (ALSAQPISAGQVEN). A helical transmembrane segment spans residues 325-344 (VVTWIGYFCFTSNPFFYGCL). Residues 345 to 449 (NRQIRGELSK…RPAPSPRLES (105 aa)) are Cytoplasmic-facing.

Belongs to the G-protein coupled receptor 1 family. Forms heterodimer with MTNR1B. Interacts with ARRB1 and ARRB2 in a spontaneous and agonist-independent manner; leading to the internalization of GPR61 in the endosomal compartment. Predominantly expressed in the brain and testes, with relatively lower expression observed in the eye, adrenal gland and pituitary gland.

The protein localises to the cell membrane. It localises to the endosome membrane. Its function is as follows. Orphan G-protein coupled receptor. Constitutively activates the G(s)-alpha/cAMP signaling pathway. Shows a reciprocal regulatory interaction with the melatonin receptor MTNR1B most likely through receptor heteromerization. May be involved in the regulation of food intake and body weight. The protein is G-protein coupled receptor 61 (Gpr61) of Mus musculus (Mouse).